The following is an 804-amino-acid chain: Leucine--tRNA ligase (804 aa).

Positions 40–51 (PYPSGAGLHVGH) match the 'HIGH' region motif. The 'KMSKS' region signature appears at 576 to 580 (KMSKS). ATP is bound at residue Lys579.

Belongs to the class-I aminoacyl-tRNA synthetase family.

The protein localises to the cytoplasm. The catalysed reaction is tRNA(Leu) + L-leucine + ATP = L-leucyl-tRNA(Leu) + AMP + diphosphate. This is Leucine--tRNA ligase from Staphylococcus aureus (strain MRSA252).